Consider the following 324-residue polypeptide: Nucleotide-binding protein GbCGDNIH1_0395 (324 aa).

14–21 lines the ATP pocket; the sequence is GLSGAGKS. 59–62 provides a ligand contact to GTP; the sequence is DARS. The tract at residues 286–324 is disordered; sequence ISDDAPQAGAARVSTDDRNGRPEEHGSAQAPDELSRTTS. The span at 299–311 shows a compositional bias: basic and acidic residues; that stretch reads STDDRNGRPEEHG.

It belongs to the RapZ-like family.

Displays ATPase and GTPase activities. This chain is Nucleotide-binding protein GbCGDNIH1_0395, found in Granulibacter bethesdensis (strain ATCC BAA-1260 / CGDNIH1).